The primary structure comprises 130 residues: Small ribosomal subunit protein uS9 (130 aa).

It belongs to the universal ribosomal protein uS9 family.

The sequence is that of Small ribosomal subunit protein uS9 from Bordetella avium (strain 197N).